A 393-amino-acid polypeptide reads, in one-letter code: Staphopain B (393 aa).

The N-terminal stretch at 1 to 36 (MNSSCKSRVFNIISIIMVSMLILSLGAFANNNKAKA) is a signal peptide. Positions 37-219 (DSHSKQLEIN…KVEENEAIQE (183 aa)) are excised as a propeptide. Active-site residues include cysteine 243, histidine 340, and asparagine 360.

It belongs to the peptidase C47 family. In terms of assembly, in the cytoplasm, prematurely activated/folded SspB forms a stable non-covalent complex with SspC. Post-translationally, proteolytically cleaved by staphylococcal serine protease (SspA).

The protein localises to the secreted. Its activity is regulated as follows. Prematurely activated/folded staphopain B is inhibited by staphostatin B (SspC), which is probably required to protect staphylococcal cytoplasmic proteins from degradation by SspB. Also inactivated by E-64 and stimulated by EDTA. Its function is as follows. Cysteine protease that plays an important role in the inhibition of host innate immune response. Degrades host elastin, fibrogen, fibronectin and kininogen. Blocks phagocytosis of opsonised S.aureus by neutrophils and monocytes by inducing their death in a proteolytic activity-dependent manner. Decreases surface expression of the 'don't eat me' signal CD31 on neutrophils. Cleaves host galectin-3/LGALS3, thereby inhibiting the neutrophil-activating ability of the lectin. The chain is Staphopain B (sspB) from Staphylococcus aureus (strain NCTC 8325 / PS 47).